A 381-amino-acid chain; its full sequence is Cytochrome b (381 aa).

A run of 4 helical transmembrane segments spans residues 34-54 (FGSL…FLAM), 78-99 (WLIR…YLHI), 114-134 (WNIG…GYVL), and 179-199 (FFAF…LHFL). Heme b contacts are provided by histidine 84 and histidine 98. Residues histidine 183 and histidine 197 each coordinate heme b. Residue histidine 202 coordinates a ubiquinone. Transmembrane regions (helical) follow at residues 227–247 (YKDI…VLFL), 289–309 (LGGV…PFLH), 321–341 (LTQL…WIGG), and 348–368 (FIFI…IITP).

Belongs to the cytochrome b family. In terms of assembly, the cytochrome bc1 complex contains 3 respiratory subunits (MT-CYB, CYC1 and UQCRFS1), 2 core proteins (UQCRC1 and UQCRC2) and probably 6 low-molecular weight proteins. Requires heme b as cofactor.

It localises to the mitochondrion inner membrane. In terms of biological role, component of the ubiquinol-cytochrome c reductase complex (complex III or cytochrome b-c1 complex) that is part of the mitochondrial respiratory chain. The b-c1 complex mediates electron transfer from ubiquinol to cytochrome c. Contributes to the generation of a proton gradient across the mitochondrial membrane that is then used for ATP synthesis. This chain is Cytochrome b (mt-cyb), found in Heterodontus francisci (Horn shark).